Reading from the N-terminus, the 1076-residue chain is MLRNGNEGMSTIPGFSQIQFEGFCRFINQALAEELDKFPIIKDPDHEIAFQLFAKGYQLLEPSIKERDAVYESLTYSSELYVSARLIFGFDVQKQTISIGNIPIMNSLGTFIINGIYRIVINQILLSPGIYYRSELDHKGISIYTGTIISDWGGRSELAIDKKERIWARVSRKQKISILVLSSAMGSNLREILDNVSYPEIFLSFPNAKEKKRIESKEKAILEFYQQFACVGGDLVFSESLCEELQKKFFQQKCELGRIGRRNMNRRLNLDIPQNNTFLLPRDVLAATDHLIGMKFGTGILDDDDMNHLKNKRIRSVADLLQDQFGLALGRLQHAVQKTIRRVFIRQSKPTPQTLVTPTSTSILLITTYETFFGTYPLSQVFDQTNPLTQTVHGRKVSCLGPGGLTGRTASFRSRDIHPSHYGRICPIDTSEGINVGLTGSLAIHARIDHLWGSIESPFYEISAEKAKKKKARQVVYLSPNRDEYYMIAAGNSLSLNQGIQEEQVVPARYRQEFLTIAWEQIHVRSIFPFQYFSIGGSLIPFIEHNDANRALMSSNMQRQAVPLSRSEKCIVGTGLERQTALDSRVSVIAEREGKIVSTDSHKILLSSSGKTISIPLVNHRRSNKNTCMHQKPRVPRGKSIKKGQILAEGAATVGGELALGKNVLVAYMPWEGYNFEDAVLISERLVYEDIYTSFHIRKYEIQTDTTSQGSAEKITKEIPHLEEHLLRNLDRNGVVRLGSWVETGDILVGKLTPQIASESSYIAEAGLLRAIFGLEVSTSKETSLKLPIGGRGRVIDVKWIQRDPLDIMVRVYILQKREIKVGDKVAGRHGNKGIISKILPRQDMPYLQDGTPVDMVFNPLGVPSRMNVGQIFESSLGLAGDLLKKHYRIAPFDERYEQEASRKLVFSELYEASKETKNPWVFEPEYPGKSRIFDGRTGDPFEQPVLIGKSYILKLIHQVDEKIHGRSTGPYSLVTQQPVRGRAKQGGQRVGEMEVWALEGFGVAHILQEILTYKSDHLIARQEILNATIWGKRIPNHEDPPESFRVLVRELRSLALELNHFLVSEKNFQINREEV.

Belongs to the RNA polymerase beta chain family. In terms of assembly, in plastids the minimal PEP RNA polymerase catalytic core is composed of four subunits: alpha, beta, beta', and beta''. When a (nuclear-encoded) sigma factor is associated with the core the holoenzyme is formed, which can initiate transcription.

It localises to the plastid. Its subcellular location is the chloroplast. It carries out the reaction RNA(n) + a ribonucleoside 5'-triphosphate = RNA(n+1) + diphosphate. Functionally, DNA-dependent RNA polymerase catalyzes the transcription of DNA into RNA using the four ribonucleoside triphosphates as substrates. This is DNA-directed RNA polymerase subunit beta from Agrostis stolonifera (Creeping bentgrass).